A 511-amino-acid polypeptide reads, in one-letter code: Bifunctional purine biosynthesis protein PurH (511 aa).

Residues Met1–Val145 form the MGS-like domain.

It belongs to the PurH family.

The catalysed reaction is (6R)-10-formyltetrahydrofolate + 5-amino-1-(5-phospho-beta-D-ribosyl)imidazole-4-carboxamide = 5-formamido-1-(5-phospho-D-ribosyl)imidazole-4-carboxamide + (6S)-5,6,7,8-tetrahydrofolate. It carries out the reaction IMP + H2O = 5-formamido-1-(5-phospho-D-ribosyl)imidazole-4-carboxamide. It participates in purine metabolism; IMP biosynthesis via de novo pathway; 5-formamido-1-(5-phospho-D-ribosyl)imidazole-4-carboxamide from 5-amino-1-(5-phospho-D-ribosyl)imidazole-4-carboxamide (10-formyl THF route): step 1/1. The protein operates within purine metabolism; IMP biosynthesis via de novo pathway; IMP from 5-formamido-1-(5-phospho-D-ribosyl)imidazole-4-carboxamide: step 1/1. This Bacillus anthracis (strain A0248) protein is Bifunctional purine biosynthesis protein PurH.